A 72-amino-acid chain; its full sequence is High-potential iron-sulfur protein isozyme 1 (72 aa).

Residue A1 is modified to N-carbamoylalanine; partial. [4Fe-4S] cluster-binding residues include C34, C37, C51, and C65.

Belongs to the high-potential iron-sulfur protein (HiPIP) family. As to quaternary structure, homodimer.

Specific class of high-redox-potential 4Fe-4S ferredoxins. Functions in anaerobic electron transport in most purple and in some other photosynthetic bacteria and in at least one genus (Paracoccus) of halophilic, denitrifying bacteria. In Ectothiorhodospira mobilis, this protein is High-potential iron-sulfur protein isozyme 1.